A 142-amino-acid chain; its full sequence is Hemoglobin subunit alpha-A (142 aa).

The Globin domain occupies 2-142; that stretch reads VLSAADKTNV…VGTVLTAKYR (141 aa). H59 is a binding site for O2. H88 lines the heme b pocket.

This sequence belongs to the globin family. As to quaternary structure, heterotetramer of two alpha chains and two beta chains. In terms of tissue distribution, red blood cells.

In terms of biological role, involved in oxygen transport from the lung to the various peripheral tissues. In Anser indicus (Bar-headed goose), this protein is Hemoglobin subunit alpha-A (HBAA).